The chain runs to 244 residues: 1-(5-phosphoribosyl)-5-[(5-phosphoribosylamino)methylideneamino] imidazole-4-carboxamide isomerase (244 aa).

The Proton acceptor role is filled by D13. D132 acts as the Proton donor in catalysis.

It belongs to the HisA/HisF family.

Its subcellular location is the cytoplasm. The catalysed reaction is 1-(5-phospho-beta-D-ribosyl)-5-[(5-phospho-beta-D-ribosylamino)methylideneamino]imidazole-4-carboxamide = 5-[(5-phospho-1-deoxy-D-ribulos-1-ylimino)methylamino]-1-(5-phospho-beta-D-ribosyl)imidazole-4-carboxamide. It functions in the pathway amino-acid biosynthesis; L-histidine biosynthesis; L-histidine from 5-phospho-alpha-D-ribose 1-diphosphate: step 4/9. The sequence is that of 1-(5-phosphoribosyl)-5-[(5-phosphoribosylamino)methylideneamino] imidazole-4-carboxamide isomerase from Renibacterium salmoninarum (strain ATCC 33209 / DSM 20767 / JCM 11484 / NBRC 15589 / NCIMB 2235).